The following is a 479-amino-acid chain: Odorant receptor coreceptor (479 aa).

Topologically, residues 1-43 are cytoplasmic; sequence MHVQPTKYHGLVLDLMPNIRLMQGFGHFLFRYVSGPVLIRKLY. The chain crosses the membrane as a helical span at residues 44-64; the sequence is SWWNLIMILLQYFAIMGNLVM. Topologically, residues 65–73 are extracellular; sequence NTGDVNELT. The helical transmembrane segment at 74–94 threads the bilayer; the sequence is ANTITTLFFTHSVTKFIYVAV. Over 95–133 the chain is Cytoplasmic; sequence NSEHFYRTLGIWNQPNSHSLFAESDARYHSIALAKMRKL. Residues 134-154 form a helical membrane-spanning segment; the sequence is LVMVMVTTVLSVVAWITITFF. Residues 155–187 are Extracellular-facing; that stretch reads GDSVKNVFDKETNETYTVEIPRLPIKALYPWDA. A glycan (N-linked (GlcNAc...) asparagine) is linked at Asn167. A helical transmembrane segment spans residues 188-208; sequence MSGVPYFFSFVYQAYFLLFSM. Over 209–344 the chain is Cytoplasmic; sequence CQANLADVMF…VERHKHVVRL (136 aa). The helical transmembrane segment at 345 to 365 threads the bilayer; the sequence is VSAIGETYGAALLLHMLTSTI. At 366–383 the chain is on the extracellular side; sequence KLTLLAYQATKIDALNVY. A helical transmembrane segment spans residues 384–404; sequence GLTVIGYLVYALAQVFLFCIF. Topologically, residues 405-455 are cytoplasmic; sequence GNRLIEESSSVMEAAYSCHWYDGSEEAKTFVQIVCQQCQKAMTISGAKFFT. The chain crosses the membrane as a helical span at residues 456–476; that stretch reads VSLDLFASVLGAVVTYFMVLV. Topologically, residues 477–479 are extracellular; sequence QLK.

It belongs to the insect chemoreceptor superfamily. Heteromeric odorant receptor channel (TC 1.A.69) family. Orco subfamily. Heterodimer with conventional odorant receptors (ORs). In terms of tissue distribution, expressed in female antenna, maxillary palp and proboscis. Not detected in male tissues.

It is found in the cell membrane. Its function is as follows. Odorant coreceptor which complexes with conventional odorant receptors (ORs) to form odorant-sensing units, providing sensitive and prolonged odorant signaling and calcium permeability. Orco is a universal and integral part of the functional odorant receptor, involved in the dendritic localization of other olfactory receptors. Required for detecting a host for blood feeding. Plays a key role in preferred attraction of females for humans over non-human hosts for blood feeding. The sequence is that of Odorant receptor coreceptor from Aedes albopictus (Asian tiger mosquito).